Consider the following 43-residue polypeptide: Large ribosomal subunit protein uL5 (43 aa).

This sequence belongs to the universal ribosomal protein uL5 family. Part of the 50S ribosomal subunit; part of the 5S rRNA/L5/L18/L25 subcomplex. Contacts the 5S rRNA and the P site tRNA. Forms a bridge to the 30S subunit in the 70S ribosome.

Functionally, this is one of the proteins that bind and probably mediate the attachment of the 5S RNA into the large ribosomal subunit, where it forms part of the central protuberance. In the 70S ribosome it contacts protein S13 of the 30S subunit (bridge B1b), connecting the 2 subunits; this bridge is implicated in subunit movement. Contacts the P site tRNA; the 5S rRNA and some of its associated proteins might help stabilize positioning of ribosome-bound tRNAs. In Proteus vulgaris, this protein is Large ribosomal subunit protein uL5 (rplE).